The sequence spans 69 residues: Pancreatic propolypeptide YG (69 aa).

This sequence belongs to the NPY family.

Its subcellular location is the secreted. In Lophius americanus (American angler), this protein is Pancreatic propolypeptide YG.